Here is a 396-residue protein sequence, read N- to C-terminus: S-adenosylmethionine synthase (396 aa).

Residue His16 participates in ATP binding. Asp18 serves as a coordination point for Mg(2+). Position 44 (Glu44) interacts with K(+). Residues Glu57 and Gln100 each contribute to the L-methionine site. Residues 100–110 (QSVDIAQGVDR) are flexible loop. ATP-binding positions include 165–167 (DAK), Asp240, 246–247 (RK), Ala263, and Lys267. Asp240 provides a ligand contact to L-methionine. Lys271 serves as a coordination point for L-methionine.

Belongs to the AdoMet synthase family. In terms of assembly, homotetramer; dimer of dimers. Requires Mg(2+) as cofactor. The cofactor is K(+).

It localises to the cytoplasm. It carries out the reaction L-methionine + ATP + H2O = S-adenosyl-L-methionine + phosphate + diphosphate. It participates in amino-acid biosynthesis; S-adenosyl-L-methionine biosynthesis; S-adenosyl-L-methionine from L-methionine: step 1/1. Catalyzes the formation of S-adenosylmethionine (AdoMet) from methionine and ATP. The overall synthetic reaction is composed of two sequential steps, AdoMet formation and the subsequent tripolyphosphate hydrolysis which occurs prior to release of AdoMet from the enzyme. In Pseudomonas putida (strain W619), this protein is S-adenosylmethionine synthase.